Here is a 247-residue protein sequence, read N- to C-terminus: Cell division protein ZapD (247 aa).

This sequence belongs to the ZapD family. Interacts with FtsZ.

Its subcellular location is the cytoplasm. Cell division factor that enhances FtsZ-ring assembly. Directly interacts with FtsZ and promotes bundling of FtsZ protofilaments, with a reduction in FtsZ GTPase activity. This chain is Cell division protein ZapD, found in Salmonella choleraesuis (strain SC-B67).